We begin with the raw amino-acid sequence, 180 residues long: UPF0134 protein MPN_127 (180 aa).

It belongs to the UPF0134 family.

This is UPF0134 protein MPN_127 from Mycoplasma pneumoniae (strain ATCC 29342 / M129 / Subtype 1) (Mycoplasmoides pneumoniae).